Reading from the N-terminus, the 651-residue chain is PTS system N-acetylglucosamine-specific EIICBA component (651 aa).

In terms of domain architecture, PTS EIIC type-1 spans 1-371 (MNILGFFQRL…FNLKTPGRED (371 aa)). 12 helical membrane passes run 16 to 36 (LPIAVLPVAALLLRFGQPDLL), 40 to 60 (FIAQAGGAIFDNLALIFAIGV), 70 to 90 (GSAALAGAVGYFVMTKAMVTI), 92 to 112 (PEINMGVLAGIITGLVAGAVY), 132 to 152 (FVPIATGFFCLILAAIFGYVW), 165 to 185 (WIVSAGALGSGIFGFINRLLI), 192 to 212 (VLNTIAWFQIGEFTNAAGTVF), 232 to 252 (GFFPIMMFGLPGAALAMYLAA), 264 to 284 (LLSVAITAFLTGVTEPLEFLF), 285 to 305 (LFLAPLLYLLHAVLTGISLFI), 308 to 328 (ALGIHAGFSFSAGAIDYVLMY), and 339 to 359 (MLLVMGVVFFFVYFLLFSAVI). One can recognise a PTS EIIB type-1 domain in the interval 390-472 (TQLATSYIAA…KKVVTRGPVA (83 aa)). Residue C412 is the Phosphocysteine intermediate; for EIIB activity of the active site. At C412 the chain carries Phosphocysteine; by EIIA. Residues 519–623 (DEAFASKAVG…SMISPVVCSN (105 aa)) form the PTS EIIA type-1 domain. H556 and H571 together coordinate Zn(2+). H571 functions as the Tele-phosphohistidine intermediate; for EIIA activity in the catalytic mechanism. H571 is subject to Phosphohistidine; by HPr.

Zn(2+) serves as cofactor.

The protein resides in the cell inner membrane. The enzyme catalyses N(pros)-phospho-L-histidyl-[protein] + N-acetyl-D-glucosamine(out) = N-acetyl-D-glucosamine 6-phosphate(in) + L-histidyl-[protein]. In terms of biological role, the phosphoenolpyruvate-dependent sugar phosphotransferase system (sugar PTS), a major carbohydrate active transport system, catalyzes the phosphorylation of incoming sugar substrates concomitantly with their translocation across the cell membrane. This system is involved in N-acetylglucosamine transport. This Klebsiella pneumoniae protein is PTS system N-acetylglucosamine-specific EIICBA component (nagE).